We begin with the raw amino-acid sequence, 174 residues long: Ribosome maturation factor RimP (174 aa).

It belongs to the RimP family.

Its subcellular location is the cytoplasm. Required for maturation of 30S ribosomal subunits. The chain is Ribosome maturation factor RimP from Bdellovibrio bacteriovorus (strain ATCC 15356 / DSM 50701 / NCIMB 9529 / HD100).